The following is a 563-amino-acid chain: Beta-catenin-like protein 1 (563 aa).

Position 1 is an N-acetylmethionine (methionine 1). A disordered region spans residues 1 to 81; the sequence is MDVGELLSYQ…EEEEPLDESS (81 aa). The Nuclear localization signal signature appears at 16 to 33; it reads KRPRDDEEEELKTRRKQT. Residues 34 to 45 are compositionally biased toward basic and acidic residues; the sequence is GPRERGRYREEE. A compositionally biased stretch (acidic residues) spans 66-78; that stretch reads DGEEEEEEEEPLD. HEAT repeat units lie at residues 79 to 129 and 134 to 176; these read ESSV…VVAT and YHLL…TLHE. Lysine 91 carries the N6-acetyllysine modification. The Nuclear export signal (NES) motif lies at 130-140; sequence MPDLYHLLVEL. ARM repeat units lie at residues 178–228, 229–273, 274–323, 325–363, and 364–417; these read EEGA…MAEF, RPEM…LQDN, DENR…CLML, SNRE…AMIG, and PEGT…LLRN. Residue serine 389 is modified to Phosphoserine. A coiled-coil region spans residues 476 to 540; the sequence is DMEDEFYLRR…HIIKEYAENI (65 aa). Serine 545 carries the phosphoserine modification.

Component of the PRP19-CDC5L splicing complex composed of a core complex comprising a homotetramer of PRPF19, CDC5L, PLRG1 and BCAS2, and at least three less stably associated proteins CTNNBL1, CWC15 and HSPA8. Interacts directly with CWC15 and CDC5L in the complex. Interacts with AICDA; the interaction is important for the antibody diversification activity of AICDA. Interacts with PRPF31 (via its NLS). Interacts (via its N-terminal NLS) with KPNA1 and KPNA2.

The protein localises to the nucleus. Functionally, component of the PRP19-CDC5L complex that forms an integral part of the spliceosome and is required for activating pre-mRNA splicing. Participates in AID/AICDA-mediated somatic hypermutation (SHM) and class-switch recombination (CSR), 2 processes resulting in the production of high-affinity, mutated isotype-switched antibodies. This is Beta-catenin-like protein 1 (Ctnnbl1) from Mus musculus (Mouse).